The following is a 458-amino-acid chain: MALWGGRFTQAADQRFKQFNDSLRFDYRLAEQDIVGSVAWSKALVTVGVLTADEQRQLEEALNVLLEEVRANPQQILQSDAEDIHSWVEGKLIDKVGQLGKKLHTGRSRNDQVATDLKLWCKETVMELLTANRQLQSALVETAQANQDAVMPGYTHLQRAQPVTFAHWCLAYVEMLARDESRLQDTLKRLDVSPLGCGALAGTAYEIDREQLAGWLGFTSATRNSLDSVSDRDHVLELLSDAAIGMVHLSRFAEDLIFFNSGEAGFVELSDRVTSGSSLMPQKKNPDALELIRGKCGRVQGALTGMMMTLKGLPLAYNKDMQEDKEGLFDALDIWLDCLHMAALVLDGIQVKRPRCQDAAQQGYANATELADYLVAKGVPFREAHHIVGEAVVEAIRQGKPLEALPLADLQKFSRVIGDDVYPILSLQSCLDKRAAKGGVSPQQVAQAIDDAKVRLAL.

Belongs to the lyase 1 family. Argininosuccinate lyase subfamily.

The protein resides in the cytoplasm. The catalysed reaction is 2-(N(omega)-L-arginino)succinate = fumarate + L-arginine. It functions in the pathway amino-acid biosynthesis; L-arginine biosynthesis; L-arginine from L-ornithine and carbamoyl phosphate: step 3/3. In Salmonella typhi, this protein is Argininosuccinate lyase.